We begin with the raw amino-acid sequence, 85 residues long: MKVTLIAILTCAAVLVLHTTAEEELEAESQLMEVGMPDTELAAVDEERLFECSVSCEIEKEGNKDCKKKKCKGGWKCKFNMCVKV.

Positions 1-22 are cleaved as a signal peptide; the sequence is MKVTLIAILTCAAVLVLHTTAE. The propeptide occupies 23-48; the sequence is EELEAESQLMEVGMPDTELAAVDEER. Disulfide bonds link cysteine 52–cysteine 66, cysteine 56–cysteine 77, and cysteine 71–cysteine 82.

This sequence belongs to the neurotoxin 12 (Hwtx-2) family. 02 (Hwtx-2) subfamily. In terms of assembly, monomer. Expressed by the venom gland.

The protein resides in the secreted. Neurotoxin active on both insects and mammals. The protein is U4-theraphotoxin-Hhn1a of Cyriopagopus hainanus (Chinese bird spider).